Here is a 310-residue protein sequence, read N- to C-terminus: N-acetyl-gamma-glutamyl-phosphate reductase (310 aa).

C117 is a catalytic residue.

It belongs to the NAGSA dehydrogenase family. Type 2 subfamily.

It is found in the cytoplasm. The catalysed reaction is N-acetyl-L-glutamate 5-semialdehyde + phosphate + NADP(+) = N-acetyl-L-glutamyl 5-phosphate + NADPH + H(+). It functions in the pathway amino-acid biosynthesis; L-arginine biosynthesis; N(2)-acetyl-L-ornithine from L-glutamate: step 3/4. Functionally, catalyzes the NADPH-dependent reduction of N-acetyl-5-glutamyl phosphate to yield N-acetyl-L-glutamate 5-semialdehyde. This is N-acetyl-gamma-glutamyl-phosphate reductase from Rhizobium rhizogenes (strain K84 / ATCC BAA-868) (Agrobacterium radiobacter).